The primary structure comprises 1134 residues: Centrosomal protein of 131 kDa (1134 aa).

5 disordered regions span residues 111-131 (NSSE…EEGE), 168-208 (DLPG…PLTL), 286-306 (ESSK…APSS), 425-455 (VGKK…TINP), and 492-528 (DQKQ…EDSR). Positions 180-196 (MHADLDSSDCDNDKQEV) are enriched in basic and acidic residues. Residues 494-504 (KQYDGKHKPGL) show a composition bias toward basic and acidic residues. Positions 513-522 (NDTASQLSLK) are enriched in polar residues. Residues 732 to 1131 (LESQNQAWEH…AVIRQQRKDY (400 aa)) adopt a coiled-coil conformation.

This sequence belongs to the CEP131 family. In terms of tissue distribution, expressed in chordotonal (Ch) neuronal precursors. Expressed in ciliated cells, like sensory neurons and spermatids.

It is found in the cytoplasm. It localises to the cytoskeleton. Its subcellular location is the microtubule organizing center. The protein localises to the centrosome. The protein resides in the cilium basal body. It is found in the centriole. Its function is as follows. Cilium-specific protein with a role in cilium/flagellum formation. May be involved in transport of components into the growing cilium. In germ cells and sensory neurons, plays a role with Cby in the building of the transition zone necessary for the formation of the ciliary cap and for the correct elongation of the axoneme. The polypeptide is Centrosomal protein of 131 kDa (Drosophila melanogaster (Fruit fly)).